Here is a 320-residue protein sequence, read N- to C-terminus: Homoserine kinase (320 aa).

Residue 100 to 110 (PLSSGMGSSAA) coordinates ATP.

Belongs to the GHMP kinase family. Homoserine kinase subfamily.

It localises to the cytoplasm. It catalyses the reaction L-homoserine + ATP = O-phospho-L-homoserine + ADP + H(+). The protein operates within amino-acid biosynthesis; L-threonine biosynthesis; L-threonine from L-aspartate: step 4/5. Catalyzes the ATP-dependent phosphorylation of L-homoserine to L-homoserine phosphate. This Chlorobium phaeovibrioides (strain DSM 265 / 1930) (Prosthecochloris vibrioformis (strain DSM 265)) protein is Homoserine kinase.